The chain runs to 261 residues: MSDILDRIIAVKREEVAAAMRSAPLEALKLEASARDLRDFVGALRAKQAAGHAAVIAEVKKASPSKGVLREHFVPADIARSYAAHGAACLSVLTDEQFFQGSVRYLEEARAACTLPVLRKDFIVDAYQILEARAMGADAILLIAAALDTPLMQDLEAYAHSLGLAVLVEVHDRDEMEQALTLKTPLLGINNRNLRTFETSIQTTLDMLDMIPPERMVVTESGILSRTDVDTMRAANVNAFLVGEAFMRADQPGEELARMFF.

Belongs to the TrpC family.

The enzyme catalyses 1-(2-carboxyphenylamino)-1-deoxy-D-ribulose 5-phosphate + H(+) = (1S,2R)-1-C-(indol-3-yl)glycerol 3-phosphate + CO2 + H2O. It participates in amino-acid biosynthesis; L-tryptophan biosynthesis; L-tryptophan from chorismate: step 4/5. This Burkholderia ambifaria (strain MC40-6) protein is Indole-3-glycerol phosphate synthase.